The following is a 200-amino-acid chain: Mediator of RNA polymerase II transcription subunit 22 (200 aa).

Residues 93–122 adopt a coiled-coil conformation; sequence SVNEAIDQRNQQLRALQEECDRKLITLRDE. The disordered stretch occupies residues 167-200; the sequence is SAPLLASPETGAGPLQSAAPVHSHGGGPGPTEHT. Positions 190–200 are enriched in gly residues; sequence HGGGPGPTEHT.

It belongs to the Mediator complex subunit 22 family. In terms of assembly, component of the Mediator complex, which is composed of MED1, MED4, MED6, MED7, MED8, MED9, MED10, MED11, MED12, MED13, MED13L, MED14, MED15, MED16, MED17, MED18, MED19, MED20, MED21, MED22, MED23, MED24, MED25, MED26, MED27, MED29, MED30, MED31, CCNC, CDK8 and CDC2L6/CDK11. The MED12, MED13, CCNC and CDK8 subunits form a distinct module termed the CDK8 module. Mediator containing the CDK8 module is less active than Mediator lacking this module in supporting transcriptional activation. Individual preparations of the Mediator complex lacking one or more distinct subunits have been variously termed ARC, CRSP, DRIP, PC2, SMCC and TRAP.

It localises to the nucleus. Component of the Mediator complex, a coactivator involved in the regulated transcription of nearly all RNA polymerase II-dependent genes. Mediator functions as a bridge to convey information from gene-specific regulatory proteins to the basal RNA polymerase II transcription machinery. Mediator is recruited to promoters by direct interactions with regulatory proteins and serves as a scaffold for the assembly of a functional preinitiation complex with RNA polymerase II and the general transcription factors. The polypeptide is Mediator of RNA polymerase II transcription subunit 22 (Med22) (Rattus norvegicus (Rat)).